Reading from the N-terminus, the 417-residue chain is WAT1-related protein At3g02690, chloroplastic (417 aa).

A chloroplast-targeting transit peptide spans 1 to 68 (MEWPWSAIAA…RRINGDSVVR (68 aa)). Residues 67 to 92 (VRRSTTSNNSTEETESSSSSSSVDCV) are disordered. A compositionally biased stretch (low complexity) spans 68–89 (RRSTTSNNSTEETESSSSSSSV). Helical transmembrane passes span 122-142 (FLEW…MVAM), 152-172 (FFVA…FAVY), 183-203 (AWFS…GFLA), 213-233 (LGSV…SFLF), 237-257 (IGIV…LLEV), 269-289 (LWGS…IGTV), 301-321 (IMAT…ISVI), 339-359 (VIAL…VYFY), 369-389 (LSSL…LYLN), and 392-412 (FSSL…LVNF). 2 consecutive EamA domains span residues 133-255 (FFWG…LLLL) and 283-411 (SMAI…YLVN).

It belongs to the drug/metabolite transporter (DMT) superfamily. Plant drug/metabolite exporter (P-DME) (TC 2.A.7.4) family.

The protein localises to the plastid. It is found in the chloroplast membrane. The protein is WAT1-related protein At3g02690, chloroplastic of Arabidopsis thaliana (Mouse-ear cress).